The sequence spans 91 residues: Small ribosomal subunit protein bS16 (91 aa).

The protein belongs to the bacterial ribosomal protein bS16 family.

This chain is Small ribosomal subunit protein bS16, found in Exiguobacterium sibiricum (strain DSM 17290 / CCUG 55495 / CIP 109462 / JCM 13490 / 255-15).